Reading from the N-terminus, the 492-residue chain is Malonyl-CoA decarboxylase, mitochondrial (492 aa).

Residues Met1–Ala38 constitute a mitochondrion transit peptide. The tract at residues Met39 to Phe189 is alpha-helical domain. Lys58 is subject to N6-acetyllysine. At Lys167 the chain carries N6-acetyllysine; alternate. N6-succinyllysine; alternate is present on Lys167. The segment at Ser190–Leu492 is catalytic domain. Lys210 is subject to N6-acetyllysine. Lys221 bears the N6-succinyllysine mark. Residue Gln298 to Thr304 participates in malonyl-CoA binding. The residue at position 316 (Lys316) is an N6-acetyllysine. Malonyl-CoA is bound at residue Ser328. Ser328 functions as the Proton acceptor in the catalytic mechanism. At Lys385 the chain carries N6-acetyllysine; alternate. At Lys385 the chain carries N6-succinyllysine; alternate. An N6-acetyllysine modification is found at Lys388. His422 is a malonyl-CoA binding site. Catalysis depends on His422, which acts as the Proton donor. 2 positions are modified to N6-acetyllysine: Lys441 and Lys471. A Microbody targeting signal motif is present at residues Ser490–Leu492.

In terms of assembly, homotetramer. Dimer of dimers. The two subunits within a dimer display conformational differences suggesting that at any given moment, only one of the two subunits is competent for malonyl-CoA binding and catalytic activity. Under oxidizing conditions, can form disulfide-linked homotetramers (in vitro). Associates with the peroxisomal targeting signal receptor PEX5. In terms of processing, acetylation at Lys-471 activates malonyl-CoA decarboxylase activity. Deacetylation at Lys-471 by SIRT4 represses activity, leading to promote lipogenesis. Interchain disulfide bonds may form in peroxisomes (Potential). Interchain disulfide bonds are not expected to form in the reducing environment of the cytoplasm and mitochondria. As to expression, expressed in liver, heart, skeletal muscles and adipose tissues (at protein level). Ubiquitous. Strongly expressed in liver, kidney, heart, skeletal muscle and adipose tissues. Weakly expressed in brain.

The protein resides in the cytoplasm. Its subcellular location is the mitochondrion matrix. The protein localises to the peroxisome. It is found in the peroxisome matrix. It catalyses the reaction malonyl-CoA + H(+) = acetyl-CoA + CO2. Its pathway is metabolic intermediate biosynthesis; acetyl-CoA biosynthesis; acetyl-CoA from malonyl-CoA: step 1/1. Malonyl-CoA decarboxylase activity does not require any cofactors or divalent metal ions. In terms of biological role, catalyzes the conversion of malonyl-CoA to acetyl-CoA. In the fatty acid biosynthesis MCD selectively removes malonyl-CoA and thus assures that methyl-malonyl-CoA is the only chain elongating substrate for fatty acid synthase and that fatty acids with multiple methyl side chains are produced. In peroxisomes it may be involved in degrading intraperoxisomal malonyl-CoA, which is generated by the peroxisomal beta-oxidation of odd chain-length dicarboxylic fatty acids. Plays a role in the metabolic balance between glucose and lipid oxidation in muscle independent of alterations in insulin signaling. May play a role in controlling the extent of ischemic injury by promoting glucose oxidation. This is Malonyl-CoA decarboxylase, mitochondrial from Rattus norvegicus (Rat).